The following is an 846-amino-acid chain: Structure-specific endonuclease subunit SLX4 (846 aa).

7 disordered regions span residues 1–20 (MTDHGPDALDAFSPPRVGSA), 84–111 (KAGAENLPVHRTKRRKLGNQRDNTAESM), 123–164 (QPAE…VKKA), 283–322 (RTSKSLDSESLDTGTSSTSEGNGKRKQTKKAKRSAKSKIT), 480–513 (DPTPKITPKPGDERQSNLSNKNTERNIPEESSLL), 624–690 (PPNA…MGSQ), and 723–751 (TLASRSASSHITPQISSAPSQTVPIQTRA). A compositionally biased stretch (basic and acidic residues) spans 141-153 (KPSEKGQKSEKTA). Over residues 293-303 (LDTGTSSTSEG) the composition is skewed to polar residues. Residues 306 to 318 (KRKQTKKAKRSAK) show a composition bias toward basic residues. Polar residues-rich tracts occupy residues 657-680 (KEITNPARSSWSTAKNLKSSSKPT) and 725-751 (ASRSASSHITPQISSAPSQTVPIQTRA).

The protein belongs to the SLX4 family. In terms of assembly, forms a heterodimer with SLX1. Phosphorylated in response to DNA damage.

The protein resides in the nucleus. In terms of biological role, regulatory subunit of the SLX1-SLX4 structure-specific endonuclease that resolves DNA secondary structures generated during DNA repair and recombination. Has endonuclease activity towards branched DNA substrates, introducing single-strand cuts in duplex DNA close to junctions with ss-DNA. This Arthroderma otae (strain ATCC MYA-4605 / CBS 113480) (Microsporum canis) protein is Structure-specific endonuclease subunit SLX4.